The following is a 60-amino-acid chain: Short neurotoxin 1 (60 aa).

4 disulfides stabilise this stretch: Cys3/Cys22, Cys17/Cys39, Cys41/Cys52, and Cys53/Cys58.

The protein belongs to the three-finger toxin family. Short-chain subfamily. Type I alpha-neurotoxin sub-subfamily. Expressed by the venom gland.

It localises to the secreted. Its function is as follows. Binds to muscle nicotinic acetylcholine receptor (nAChR) and inhibit acetylcholine from binding to the receptor, thereby impairing neuromuscular transmission. The polypeptide is Short neurotoxin 1 (Dendroaspis jamesoni kaimosae (Eastern Jameson's mamba)).